The chain runs to 1486 residues: Homeobox protein cut-like 2 (1486 aa).

The segment at 114 to 167 (DRLQPPSFDPSGQPRRDLHTSWKRNPELLSPKEQREGTSPAGPTLTEGSRLPGI) is disordered. The segment covering 127-149 (PRRDLHTSWKRNPELLSPKEQRE) has biased composition (basic and acidic residues). Position 143 is a phosphoserine (serine 143). A coiled-coil region spans residues 195-374 (TLAARLGEAE…IKTELSILKA (180 aa)). 6 disordered regions span residues 415 to 481 (LLAS…LSPF), 517 to 549 (PTAPATPAPGPEPLGGPEPADGGGGGAAGPGAE), 661 to 690 (EIESQKGGEPKTSVAPLSIANGTTPASTSE), 716 to 758 (VAPR…AQAP), 800 to 858 (YASV…EGAT), and 964 to 1032 (GQAV…SGSQ). A compositionally biased stretch (acidic residues) spans 419-428 (PEEDPSEDDS). The span at 443–460 (QQLPPPPGPEDPLSPSPG) shows a compositional bias: pro residues. A compositionally biased stretch (low complexity) spans 461 to 470 (QPLLGPSLGP). Over residues 517 to 532 (PTAPATPAPGPEPLGG) the composition is skewed to pro residues. Positions 544–631 (AGPGAEEEQL…VLALRTIQVR (88 aa)) form a DNA-binding region, CUT 1. Polar residues predominate over residues 680–690 (ANGTTPASTSE). Positions 690-717 (EDAIKSILEQARREMQAQQQALLEMEVA) form a coiled coil. Residues 802-816 (SVSPSLSSSSSSGYS) show a composition bias toward low complexity. Residues 834 to 844 (PEDEAAAGAED) are compositionally biased toward acidic residues. Residues 845 to 854 (EPPRTGELKA) show a composition bias toward basic and acidic residues. Positions 887–974 (QYELYMYREV…QAVGQQPGAS (88 aa)) form a DNA-binding region, CUT 2. Positions 967 to 976 (VGQQPGASQA) are enriched in polar residues. Positions 1017–1031 (GRSSSSLSGKMYSGS) are enriched in low complexity. A DNA-binding region (CUT 3) is located at residues 1038–1125 (QEIVAMSPEL…VEKLRDMKKL (88 aa)). Positions 1168-1227 (IKKPRVVLAPEEKEALRKAYQLEPYPSQQTIELLSFQLNLKTNTVINWFHNYRSRMRREM) form a DNA-binding region, homeobox. Residues 1231–1453 (GTQDEPDLDP…ALHPSAKVNP (223 aa)) form a disordered region. Basic and acidic residues predominate over residues 1266 to 1276 (EDQKPTVKELE). Over residues 1283–1293 (ENSTPLTTQDK) the composition is skewed to polar residues. Residues 1320–1334 (ELDKGQGPPKEEHPD) are compositionally biased toward basic and acidic residues. Over residues 1381–1401 (KSASESSRCSLEVSLNSPSAA) the composition is skewed to polar residues. Low complexity predominate over residues 1402-1420 (SSPGLMMSVSPVPSSSAPI). Positions 1421–1431 (SPSPPGAPPAK) are enriched in pro residues.

The protein belongs to the CUT homeobox family.

The protein localises to the nucleus. Functionally, transcription factor involved in the control of neuronal proliferation and differentiation in the brain. Regulates dendrite development and branching, dendritic spine formation, and synaptogenesis in cortical layers II-III. Binds to DNA in a sequence-specific manner. The chain is Homeobox protein cut-like 2 (CUX2) from Homo sapiens (Human).